Consider the following 432-residue polypeptide: Peptidyl-prolyl cis-trans isomerase cyp6 (432 aa).

The PPIase cyclophilin-type domain maps to 1 to 168 (MSVLIETTVG…RDIRIKHTII (168 aa)). The residue at position 206 (Ser-206) is a Phosphoserine. The RRM domain occupies 244-322 (NVLFVCKLNP…SRIHVDFSQS (79 aa)). A disordered region spans residues 330-432 (YNSNRDRKRS…DRRYRDDRYR (103 aa)). 3 stretches are compositionally biased toward basic and acidic residues: residues 341–366 (SRSDDREYHRRSDGRYDRSNYRDDYR), 373–395 (DHRDDQSSFRNERFSNYYGDDRS), and 406–432 (NCDDHLRDKSPERRYRYDRRYRDDRYR).

This sequence belongs to the cyclophilin-type PPIase family. PPIL4 subfamily.

It is found in the nucleus. The catalysed reaction is [protein]-peptidylproline (omega=180) = [protein]-peptidylproline (omega=0). In terms of biological role, PPIases accelerate the folding of proteins. It catalyzes the cis-trans isomerization of proline imidic peptide bonds in oligopeptides. This is Peptidyl-prolyl cis-trans isomerase cyp6 (cyp6) from Schizosaccharomyces pombe (strain 972 / ATCC 24843) (Fission yeast).